We begin with the raw amino-acid sequence, 471 residues long: Alpha-amylase (471 aa).

Glutamine 1 bears the Pyrrolidone carboxylic acid mark. A disulfide bond links cysteine 28 and cysteine 84. Residues asparagine 98, arginine 146, and aspartate 155 each contribute to the Ca(2+) site. Cysteine 134 and cysteine 148 are disulfide-bonded. Arginine 183 provides a ligand contact to chloride. The Nucleophile role is filled by aspartate 185. Histidine 189 lines the Ca(2+) pocket. Glutamate 222 (proton donor) is an active-site residue. Chloride contacts are provided by asparagine 285 and arginine 321. Residues 326 to 343 (FDFTDNDQGPPQDGSGNL) show a composition bias toward polar residues. A disordered region spans residues 326-346 (FDFTDNDQGPPQDGSGNLISP). 2 disulfide bridges follow: cysteine 354–cysteine 360 and cysteine 425–cysteine 437.

Belongs to the glycosyl hydrolase 13 family. As to quaternary structure, monomer. It depends on Ca(2+) as a cofactor. Requires chloride as cofactor.

The enzyme catalyses Endohydrolysis of (1-&gt;4)-alpha-D-glucosidic linkages in polysaccharides containing three or more (1-&gt;4)-alpha-linked D-glucose units.. This chain is Alpha-amylase, found in Tenebrio molitor (Yellow mealworm beetle).